We begin with the raw amino-acid sequence, 691 residues long: Glycine--tRNA ligase beta subunit (691 aa).

The protein belongs to the class-II aminoacyl-tRNA synthetase family. Tetramer of two alpha and two beta subunits.

Its subcellular location is the cytoplasm. It catalyses the reaction tRNA(Gly) + glycine + ATP = glycyl-tRNA(Gly) + AMP + diphosphate. In Limosilactobacillus reuteri (strain DSM 20016) (Lactobacillus reuteri), this protein is Glycine--tRNA ligase beta subunit.